The following is a 148-amino-acid chain: Large ribosomal subunit protein bL9 (148 aa).

This sequence belongs to the bacterial ribosomal protein bL9 family.

In terms of biological role, binds to the 23S rRNA. This chain is Large ribosomal subunit protein bL9, found in Staphylococcus aureus (strain bovine RF122 / ET3-1).